A 615-amino-acid polypeptide reads, in one-letter code: Dihydroxy-acid dehydratase (615 aa).

Position 81 (Asp81) interacts with Mg(2+). Residue Cys122 coordinates [2Fe-2S] cluster. Positions 123 and 124 each coordinate Mg(2+). Lys124 bears the N6-carboxylysine mark. Cys193 contributes to the [2Fe-2S] cluster binding site. Glu489 is a Mg(2+) binding site. The Proton acceptor role is filled by Ser515.

The protein belongs to the IlvD/Edd family. In terms of assembly, homodimer. [2Fe-2S] cluster is required as a cofactor. Mg(2+) serves as cofactor.

It catalyses the reaction (2R)-2,3-dihydroxy-3-methylbutanoate = 3-methyl-2-oxobutanoate + H2O. The enzyme catalyses (2R,3R)-2,3-dihydroxy-3-methylpentanoate = (S)-3-methyl-2-oxopentanoate + H2O. It participates in amino-acid biosynthesis; L-isoleucine biosynthesis; L-isoleucine from 2-oxobutanoate: step 3/4. The protein operates within amino-acid biosynthesis; L-valine biosynthesis; L-valine from pyruvate: step 3/4. Its function is as follows. Functions in the biosynthesis of branched-chain amino acids. Catalyzes the dehydration of (2R,3R)-2,3-dihydroxy-3-methylpentanoate (2,3-dihydroxy-3-methylvalerate) into 2-oxo-3-methylpentanoate (2-oxo-3-methylvalerate) and of (2R)-2,3-dihydroxy-3-methylbutanoate (2,3-dihydroxyisovalerate) into 2-oxo-3-methylbutanoate (2-oxoisovalerate), the penultimate precursor to L-isoleucine and L-valine, respectively. In Pseudomonas savastanoi pv. phaseolicola (strain 1448A / Race 6) (Pseudomonas syringae pv. phaseolicola (strain 1448A / Race 6)), this protein is Dihydroxy-acid dehydratase.